The sequence spans 314 residues: Oxidoreductase NAD-binding domain-containing protein 1 (314 aa).

The N-terminal stretch at 1–18 (MALVAGSAAYQVLRGVTG) is a signal peptide. An FAD-binding FR-type domain is found at 63–166 (EIISPAKVCG…VGGEFCFDPQ (104 aa)). 180 to 185 (GVGINP) provides a ligand contact to NAD(+).

This chain is Oxidoreductase NAD-binding domain-containing protein 1 (oxnad1), found in Xenopus laevis (African clawed frog).